An 894-amino-acid chain; its full sequence is MIDAWAIKRALCIFILINCVLKLGRSRKITWKPKKGVYIPLDDANGCKGEWKRKGVFFNIQSGKKGKRLKGRKGLRRGLVTRGTPQFRRDKFIPLFLLQDCEHRSLNGKQYNLRGRRCSSPLDVNPRGWDILPPEQPNEETIGERIGERIGEAEQLEDEGLDGGPPPGMEAKKSSSSSSSNNVHSNCSDAGKAPVCSQENIRNFCILAHIDSGKSTLADRFLELTKTIKKKKMQDQFLDMMSLEREKGITIKLKAVRMNYKNYIFNLIDTPGHFDFYHEVKRSLSVCEGAILLIDGTKGIQSQTLNIFMELQKHNLKIIPVINKIDLNICRLEKIENDLLNKFHFMKKDILHISAKYSHGVESLFQRIVSEIPSPAIKSNSFFRAIVFDSFYDQYKGVILIIKVLNGVLTKKTEVFFIQSEKTYIIQEVGYLTPEMKPTESIRQGDIAYVSSNIRKCDEVQMSETIISRDIVHLNAQRRLVVDSDLLRRNPSGEEHINVKRCNIDSSLGGVAPRMERIEREVNLEEIAASKVDVSYPVVFCNIYSVNDKQANELQAALNKLKLNDASFSFKPDVCETLGKGFKCGFNGLLHLNIIQERIKREYDVETIVTAPSVNYLIRVKEKCIDKQLKERLIDASFDIANINVEGGDHDDCNDNGGSNSDDRSDRSGKNPPDGLYYMTSNVNDIPQKNYIHGIYEPYVRTSIMTPEEYQKYIMAECFQRRGIFIKKESMDSHIIFYFDMPLSEILINFLDQIKSCTKGYGSMSYENFITYRESDLHKINIYVNNRSIDSLSFLAHKLNYQEKGKRIVLKLKEMIKPHQFLVVIQAGIGTRIFASERINPLRKNVTAKCYGGDITRRRKLLEKQSAGKKKMFSIGKVKLPPNMFTKLFDLKAQ.

The tract at residues 157–189 (EDEGLDGGPPPGMEAKKSSSSSSSNNVHSNCSD) is disordered. Residues 174-188 (SSSSSSSNNVHSNCS) are compositionally biased toward low complexity. The region spanning 199-376 (ENIRNFCILA…RIVSEIPSPA (178 aa)) is the tr-type G domain. GTP-binding positions include 208-215 (AHIDSGKS), 269-273 (DTPGH), and 323-326 (NKID). The disordered stretch occupies residues 649–674 (DHDDCNDNGGSNSDDRSDRSGKNPPD).

Belongs to the TRAFAC class translation factor GTPase superfamily. Classic translation factor GTPase family. LepA subfamily.

Its subcellular location is the mitochondrion inner membrane. The enzyme catalyses GTP + H2O = GDP + phosphate + H(+). Promotes mitochondrial protein synthesis. May act as a fidelity factor of the translation reaction, by catalyzing a one-codon backward translocation of tRNAs on improperly translocated ribosomes. Binds to mitochondrial ribosomes in a GTP-dependent manner. This chain is Translation factor GUF1 homolog, mitochondrial, found in Plasmodium knowlesi (strain H).